The chain runs to 459 residues: Vanillin aminotransferase (459 aa).

Pyridoxal 5'-phosphate is bound by residues 115–116 (GS) and D255. N6-(pyridoxal phosphate)lysine is present on K284. 320 to 321 (FT) serves as a coordination point for pyridoxal 5'-phosphate. Positions 430-457 (LEELDELIRIYGKALKDTEKRVEELKSQ) form a coiled coil.

It belongs to the class-III pyridoxal-phosphate-dependent aminotransferase family. Confined to the placenta of green fruits at high levels. Barely detectable in the pericarp and seeds as well as in the placenta of mature fruits.

It catalyses the reaction vanillin + L-alanine = vanillylamine + pyruvate. It participates in aromatic compound metabolism; phenylpropanoid biosynthesis. Involved in the biosynthesis of capsaicinoids natural products, pungent alkaloids synthesized from phenylpropanoid intermediates in the placental tissue of chili pepper fruit acting as repellant on herbivorous mammals and conferring spiciness to hot peppers. Can transfer an amine from vanillylamine to pyruvate forming vanillin and L-alanine. In Capsicum annuum (Capsicum pepper), this protein is Vanillin aminotransferase.